The sequence spans 293 residues: 33 kDa chaperonin (293 aa).

Cystine bridges form between cysteine 237-cysteine 239 and cysteine 271-cysteine 274.

The protein belongs to the HSP33 family. Under oxidizing conditions two disulfide bonds are formed involving the reactive cysteines. Under reducing conditions zinc is bound to the reactive cysteines and the protein is inactive.

Its subcellular location is the cytoplasm. In terms of biological role, redox regulated molecular chaperone. Protects both thermally unfolding and oxidatively damaged proteins from irreversible aggregation. Plays an important role in the bacterial defense system toward oxidative stress. The protein is 33 kDa chaperonin of Haemophilus influenzae (strain PittEE).